We begin with the raw amino-acid sequence, 352 residues long: DNA-directed RNA polymerase subunit alpha (352 aa).

The alpha N-terminal domain (alpha-NTD) stretch occupies residues 1–236 (MTVNIRNWQE…DQLQVFVHFE (236 aa)). An alpha C-terminal domain (alpha-CTD) region spans residues 257-352 (SDVNQLNRFL…AKKLEQELLG (96 aa)).

It belongs to the RNA polymerase alpha chain family. In terms of assembly, homodimer. The RNAP catalytic core consists of 2 alpha, 1 beta, 1 beta' and 1 omega subunit. When a sigma factor is associated with the core the holoenzyme is formed, which can initiate transcription.

The catalysed reaction is RNA(n) + a ribonucleoside 5'-triphosphate = RNA(n+1) + diphosphate. DNA-dependent RNA polymerase catalyzes the transcription of DNA into RNA using the four ribonucleoside triphosphates as substrates. The chain is DNA-directed RNA polymerase subunit alpha from Sphingopyxis alaskensis (strain DSM 13593 / LMG 18877 / RB2256) (Sphingomonas alaskensis).